The chain runs to 308 residues: MENRSLVTIAEHSREKILYMLEMAKQFEKNPNRRLLEGKVVATLFFEPSTRTRLSFETAANRLGARVIGFSDPKATSSSKGETLKDTIMMVSNYADVIVMRHYLEGAARYASEVAPVPIVNAGDGANQHPSQTMLDLYSIYKTQGTLENLNIYLVGDLKYGRTVHSLLMAMRHFNPTFHFIAPEELKMPEEYKIYCKEHNIKYVEHTDFNEEVIKDADILYMTRVQRERFTDLMEYERVKNVYILKAKMLENTRSNLRILHPLPRVNEIAYDVDDSPKAYYFQQAQNGLYARQAILCDVLGITLQDIL.

Carbamoyl phosphate-binding residues include Arg51 and Thr52. Residue Lys80 coordinates L-aspartate. 3 residues coordinate carbamoyl phosphate: Arg101, His129, and Gln132. Arg162 and Arg224 together coordinate L-aspartate. Residues Leu263 and Pro264 each coordinate carbamoyl phosphate.

This sequence belongs to the aspartate/ornithine carbamoyltransferase superfamily. ATCase family. Heterododecamer (2C3:3R2) of six catalytic PyrB chains organized as two trimers (C3), and six regulatory PyrI chains organized as three dimers (R2).

The catalysed reaction is carbamoyl phosphate + L-aspartate = N-carbamoyl-L-aspartate + phosphate + H(+). It functions in the pathway pyrimidine metabolism; UMP biosynthesis via de novo pathway; (S)-dihydroorotate from bicarbonate: step 2/3. Catalyzes the condensation of carbamoyl phosphate and aspartate to form carbamoyl aspartate and inorganic phosphate, the committed step in the de novo pyrimidine nucleotide biosynthesis pathway. This Bacteroides fragilis (strain ATCC 25285 / DSM 2151 / CCUG 4856 / JCM 11019 / LMG 10263 / NCTC 9343 / Onslow / VPI 2553 / EN-2) protein is Aspartate carbamoyltransferase catalytic subunit.